The primary structure comprises 327 residues: Protein UL95 homolog (327 aa).

The protein belongs to the herpesviridae UL95 family. As to quaternary structure, interacts with ORF24; this interaction may serve as a core scaffold for the assembly of the viral transcription initiation complex. Interacts with ORF66. Interacts with ORF18. Interacts with ORF23. Interacts with ORF31. Interacts with host EPAS1; this interaction stabilizes host EPAS1, ensuring its transcriptional activity.

The protein localises to the host nucleus. In terms of biological role, participates in the expression of late viral mRNAs in part by interacting with ORF24. Expressed before viral DNA replication, assembles at the viral pre-replication complexes (pre-RCs) and thus serves as a hub for recruiting a viral transcription complex to ORF24 to promote late viral gene expression. Also plays a regulatory role in the viral life cycle by regulating host transcriptional regulators HIF1A and EPAS1. In Homo sapiens (Human), this protein is Protein UL95 homolog (ORF34).